Here is a 98-residue protein sequence, read N- to C-terminus: Small ribosomal subunit protein uS19 (98 aa).

The tract at residues 77-98 is disordered; sequence TRTFRGHAGGKAEKGGSAPKRK.

The protein belongs to the universal ribosomal protein uS19 family.

In terms of biological role, protein S19 forms a complex with S13 that binds strongly to the 16S ribosomal RNA. In Chlorobium luteolum (strain DSM 273 / BCRC 81028 / 2530) (Pelodictyon luteolum), this protein is Small ribosomal subunit protein uS19.